A 187-amino-acid chain; its full sequence is Lysozyme C-like protein DDB_G0288143 (187 aa).

Positions 1 to 23 (MKVSNLISTITIASALCLSLTNA) are cleaved as a signal peptide. 3 cysteine pairs are disulfide-bonded: cysteine 50-cysteine 125, cysteine 74-cysteine 82, and cysteine 78-cysteine 97. Residue glutamate 55 is part of the active site. Residues 133–187 (QHGSHSSTSRDSSSSSSRDSTGTGYSSSGSGTSGSGSNSGQTGHFIPGQSGHGLN) are disordered. A compositionally biased stretch (low complexity) spans 136 to 175 (SHSSTSRDSSSSSSRDSTGTGYSSSGSGTSGSGSNSGQTG).

The protein belongs to the glycosyl hydrolase 22 family.

This chain is Lysozyme C-like protein DDB_G0288143, found in Dictyostelium discoideum (Social amoeba).